Consider the following 294-residue polypeptide: MAAGRLLLYTGLSLALCALGMLAVAICSDHWYETDARKHRDRCKAFNTRRVDPGFIYNNNNNLPLRASRSRLDRWEGKLLRARNRRQLFAMSPADECSRQYNSTNMGLWRKCHRQGFDPEIAALIRKGEIERCTYIKYHYSSATIPRNLTFNITKTIRQDEWHALHLRRMTAGFMGMAVAIILFGWIIGVLGCCWDRGLMQYVAGLLFLMGGTFCIISLCTCVAGINFELSRYPRYLYGLPDDISHGYGWSMFCAWGGLGLTLISGFFCTLAPSVQPVPRTNYPKSRPENGTVC.

The signal sequence occupies residues 1–23 (MAAGRLLLYTGLSLALCALGMLA). Asparagine 148 and asparagine 152 each carry an N-linked (GlcNAc...) asparagine glycan. A run of 3 helical transmembrane segments spans residues 172-192 (AGFM…GVLG), 206-226 (LLFL…VAGI), and 252-272 (MFCA…CTLA).

Belongs to the TMEM178 family.

Its subcellular location is the membrane. This is Transmembrane protein 178B (TMEM178B) from Homo sapiens (Human).